Here is a 370-residue protein sequence, read N- to C-terminus: Protein DVU_0535 (370 aa).

The Cytoplasmic portion of the chain corresponds to 1 to 258 (MDRRRFLTLL…EELGTKSAPE (258 aa)). 4Fe-4S ferredoxin-type domains are found at residues 40–70 (YGVL…APKA), 101–132 (DHPV…KNPD), and 133–162 (GSVT…FQYA). [4Fe-4S] cluster-binding residues include cysteine 49, cysteine 52, cysteine 55, cysteine 59, cysteine 110, cysteine 113, cysteine 118, cysteine 122, cysteine 142, cysteine 145, cysteine 148, cysteine 152, cysteine 172, cysteine 175, cysteine 187, and cysteine 191. The helical transmembrane segment at 259-284 (YTAGALGAVPMVVGIWPILLTGAYAI) threads the bilayer. Over 285 to 370 (TKRKEKIAAE…DDAGKPGEDA (86 aa)) the chain is Periplasmic. Over residues 345–355 (FEEELAAKEQP) the composition is skewed to basic and acidic residues. Residues 345-370 (FEEELAAKEQPEAPEGDDAGKPGEDA) are disordered.

The protein localises to the cell membrane. Functionally, HMWC (high-molecular-weight cytochrome c precursor), ORF2, ORF3, ORF4, ORF5, ORF6 in the HMC operon form a transmembrane protein complex that allows electron flow from the periplasmic hydrogenase to the cytoplasmic enzymes that catalyze reduction of sulfates. ORF2 is a transmembrane redox protein. The protein is Protein DVU_0535 of Nitratidesulfovibrio vulgaris (strain ATCC 29579 / DSM 644 / CCUG 34227 / NCIMB 8303 / VKM B-1760 / Hildenborough) (Desulfovibrio vulgaris).